Consider the following 234-residue polypeptide: Putative lipoyltransferase 2, mitochondrial (234 aa).

The N-terminal 28 residues, 1–28, are a transit peptide targeting the mitochondrion; it reads MPFVRPLVTVVRAGRHSYSAGLQLQQRL. One can recognise a BPL/LPL catalytic domain in the interval 39–220; it reads AEFRNYLVLQ…SFAKVFECRL (182 aa). Substrate contacts are provided by residues 83-90, 150-152, and 163-165; these read RGGLITFH, AIG, and GIG. C181 functions as the Acyl-thioester intermediate in the catalytic mechanism.

It belongs to the LipB family.

The protein resides in the mitochondrion. It carries out the reaction octanoyl-[ACP] + L-lysyl-[protein] = N(6)-octanoyl-L-lysyl-[protein] + holo-[ACP] + H(+). It participates in protein modification; protein lipoylation via endogenous pathway; protein N(6)-(lipoyl)lysine from octanoyl-[acyl-carrier-protein]: step 1/2. Functionally, catalyzes the transfer of endogenously produced octanoic acid from octanoyl-acyl-carrier-protein onto the lipoyl domains of lipoate-dependent enzymes. Lipoyl-ACP can also act as a substrate although octanoyl-ACP is likely to be the physiological substrate. This is Putative lipoyltransferase 2, mitochondrial from Drosophila melanogaster (Fruit fly).